We begin with the raw amino-acid sequence, 350 residues long: Glycerol-1-phosphate dehydrogenase [NAD(P)+] (350 aa).

Residues 96-100 (GNIID) and 118-121 (TAPS) each bind NAD(+). Asp-123 serves as a coordination point for substrate. Ser-127 provides a ligand contact to NAD(+). Substrate is bound at residue Asp-170. Zn(2+)-binding residues include Asp-170 and His-250. His-254 contributes to the substrate binding site. His-266 lines the Zn(2+) pocket.

This sequence belongs to the glycerol-1-phosphate dehydrogenase family. In terms of assembly, homodimer. Zn(2+) is required as a cofactor.

The protein resides in the cytoplasm. The enzyme catalyses sn-glycerol 1-phosphate + NAD(+) = dihydroxyacetone phosphate + NADH + H(+). The catalysed reaction is sn-glycerol 1-phosphate + NADP(+) = dihydroxyacetone phosphate + NADPH + H(+). It functions in the pathway membrane lipid metabolism; glycerophospholipid metabolism. In terms of biological role, catalyzes the NAD(P)H-dependent reduction of dihydroxyacetonephosphate (DHAP or glycerone phosphate) to glycerol 1-phosphate (G1P). The G1P thus generated is used as the glycerophosphate backbone of phospholipids in the cellular membranes of Archaea. The protein is Glycerol-1-phosphate dehydrogenase [NAD(P)+] of Sulfurisphaera tokodaii (strain DSM 16993 / JCM 10545 / NBRC 100140 / 7) (Sulfolobus tokodaii).